A 313-amino-acid polypeptide reads, in one-letter code: DNA-directed RNA polymerase subunit alpha (313 aa).

Positions 1–229 (MNSSNLLMEC…NLFKSIGEQK (229 aa)) are alpha N-terminal domain (alpha-NTD). The alpha C-terminal domain (alpha-CTD) stretch occupies residues 243-313 (IKPIDPYTHI…LKNKLGIVLK (71 aa)).

The protein belongs to the RNA polymerase alpha chain family. In plastids the minimal PEP RNA polymerase catalytic core is composed of four subunits: alpha, beta, beta', and beta''. When a (nuclear-encoded) sigma factor is associated with the core the holoenzyme is formed, which can initiate transcription.

Its subcellular location is the plastid. The protein localises to the chloroplast. It carries out the reaction RNA(n) + a ribonucleoside 5'-triphosphate = RNA(n+1) + diphosphate. Functionally, DNA-dependent RNA polymerase catalyzes the transcription of DNA into RNA using the four ribonucleoside triphosphates as substrates. This chain is DNA-directed RNA polymerase subunit alpha, found in Thalassiosira pseudonana (Marine diatom).